The sequence spans 98 residues: NADH-ubiquinone oxidoreductase chain 4L (98 aa).

Transmembrane regions (helical) follow at residues 2–22 (PSISTNIILAFITALLGMLIF), 29–49 (SLLCLEGMMLSMFILSTLTIL), and 61–81 (ILLLVFAACEAAVGLALLVTV).

The protein belongs to the complex I subunit 4L family. In terms of assembly, core subunit of respiratory chain NADH dehydrogenase (Complex I) which is composed of 45 different subunits.

The protein resides in the mitochondrion inner membrane. The catalysed reaction is a ubiquinone + NADH + 5 H(+)(in) = a ubiquinol + NAD(+) + 4 H(+)(out). Core subunit of the mitochondrial membrane respiratory chain NADH dehydrogenase (Complex I) which catalyzes electron transfer from NADH through the respiratory chain, using ubiquinone as an electron acceptor. Part of the enzyme membrane arm which is embedded in the lipid bilayer and involved in proton translocation. This is NADH-ubiquinone oxidoreductase chain 4L (MT-ND4L) from Lemur catta (Ring-tailed lemur).